Reading from the N-terminus, the 78-residue chain is Large ribosomal subunit protein bL28 (78 aa).

This sequence belongs to the bacterial ribosomal protein bL28 family.

The chain is Large ribosomal subunit protein bL28 from Acidithiobacillus ferrooxidans (strain ATCC 23270 / DSM 14882 / CIP 104768 / NCIMB 8455) (Ferrobacillus ferrooxidans (strain ATCC 23270)).